The primary structure comprises 184 residues: Probable RNA 2'-phosphotransferase (184 aa).

Belongs to the KptA/TPT1 family.

Functionally, removes the 2'-phosphate from RNA via an intermediate in which the phosphate is ADP-ribosylated by NAD followed by a presumed transesterification to release the RNA and generate ADP-ribose 1''-2''-cyclic phosphate (APPR&gt;P). May function as an ADP-ribosylase. This Escherichia coli (strain K12 / MC4100 / BW2952) protein is Probable RNA 2'-phosphotransferase.